The primary structure comprises 449 residues: 3-phosphoshikimate 1-carboxyvinyltransferase (449 aa).

The segment at 1 to 26 (MNHHLPSRPARSRQSQGLKGNLRVPG) is disordered. 3-phosphoshikimate-binding residues include lysine 28, serine 29, and arginine 33. Residue lysine 28 coordinates phosphoenolpyruvate. Positions 100 and 128 each coordinate phosphoenolpyruvate. The 3-phosphoshikimate site is built by serine 174, glutamine 176, aspartate 327, and lysine 354. Glutamine 176 is a phosphoenolpyruvate binding site. The Proton acceptor role is filled by aspartate 327. Phosphoenolpyruvate contacts are provided by arginine 358 and arginine 403.

It belongs to the EPSP synthase family. As to quaternary structure, monomer.

It localises to the cytoplasm. It catalyses the reaction 3-phosphoshikimate + phosphoenolpyruvate = 5-O-(1-carboxyvinyl)-3-phosphoshikimate + phosphate. It functions in the pathway metabolic intermediate biosynthesis; chorismate biosynthesis; chorismate from D-erythrose 4-phosphate and phosphoenolpyruvate: step 6/7. Functionally, catalyzes the transfer of the enolpyruvyl moiety of phosphoenolpyruvate (PEP) to the 5-hydroxyl of shikimate-3-phosphate (S3P) to produce enolpyruvyl shikimate-3-phosphate and inorganic phosphate. This is 3-phosphoshikimate 1-carboxyvinyltransferase from Chelativorans sp. (strain BNC1).